Consider the following 56-residue polypeptide: Zinc finger mu-protein HVO_0758 (56 aa).

Positions 23, 26, 45, and 48 each coordinate Zn(2+). 2 consecutive short sequence motifs (c(P)XCG motif) follow at residues 23–27 (CSECG) and 45–49 (CADCG).

In terms of assembly, monomer.

In terms of biological role, zinc-binding protein that binds one zinc ion. Is involved in biofilm formation, swarming and glycerol metabolism regulation. The protein is Zinc finger mu-protein HVO_0758 of Haloferax volcanii (strain ATCC 29605 / DSM 3757 / JCM 8879 / NBRC 14742 / NCIMB 2012 / VKM B-1768 / DS2) (Halobacterium volcanii).